The following is a 128-amino-acid chain: Large-conductance mechanosensitive channel (128 aa).

The next 2 helical transmembrane spans lie at 10 to 30 and 76 to 96; these read FAMR…SAFG and GLFI…FMMI.

Belongs to the MscL family. Homopentamer.

Its subcellular location is the cell inner membrane. In terms of biological role, channel that opens in response to stretch forces in the membrane lipid bilayer. May participate in the regulation of osmotic pressure changes within the cell. The protein is Large-conductance mechanosensitive channel of Haemophilus influenzae (strain 86-028NP).